A 694-amino-acid chain; its full sequence is Frizzled-2 (694 aa).

An N-terminal signal peptide occupies residues 1–22; the sequence is MRHNRLKVLILGLVLLLTSCRA. Residues 23 to 315 lie on the Extracellular side of the membrane; that stretch reads DGPLHSADHG…GPFFSNDEKD (293 aa). Positions 59 to 180 constitute an FZ domain; the sequence is DPNLRCEEIT…GDPDNLCMEQ (122 aa). Intrachain disulfides connect cysteine 64-cysteine 125, cysteine 72-cysteine 118, cysteine 109-cysteine 147, cysteine 136-cysteine 177, and cysteine 140-cysteine 164. A glycan (N-linked (GlcNAc...) asparagine) is linked at asparagine 78. The interval 175–253 is disordered; it reads NLCMEQPSYT…QGEKASGKEC (79 aa). Residues 187 to 224 show a composition bias toward gly residues; sequence GSGGSSGGSGGSGSGSGSGGKRKQGGSGSGGSGAGGSS. A glycan (N-linked (GlcNAc...) asparagine) is linked at asparagine 288. The helical transmembrane segment at 316-336 threads the bilayer; it reads FAGLWIALWSGLCFCSTLMTL. At 337-352 the chain is on the cytoplasmic side; sequence TTFIIDTERFKYPERP. The chain crosses the membrane as a helical span at residues 353–373; it reads IVFLSACYFMVAVGYLSRNFL. The Extracellular portion of the chain corresponds to 374–397; that stretch reads QNEEIACDGLLLRESSTGPHSCTL. The chain crosses the membrane as a helical span at residues 398–418; the sequence is VFLLTYFFGMASSIWWVILSF. At 419–439 the chain is on the cytoplasmic side; that stretch reads TWFLAAGLKWGNEAITKHSQY. Residues 440-460 traverse the membrane as a helical segment; sequence FHLAAWLIPTVQSVAVLLLSA. Over 461-482 the chain is Extracellular; it reads VDGDPILGICYVGNLNPDHLKT. Residues 483–503 traverse the membrane as a helical segment; the sequence is FVLAPLFVYLVIGTTFLMAGF. Residues 504 to 534 are Cytoplasmic-facing; it reads VSLFRIRSVIKQQGGVGAGVKADKLEKLMIR. The helical transmembrane segment at 535 to 555 threads the bilayer; that stretch reads IGIFSVLYTVPATIVIGCYLY. The Extracellular segment spans residues 556–584; that stretch reads EAAYFEDWIKALACPCAQVKGPGKKPLYS. Residues 585–605 form a helical membrane-spanning segment; it reads VLMLKYFMALAVGITSGVWIW. Over 606–694 the chain is Cytoplasmic; it reads SGKTLESWRR…VLKQPAASHV (89 aa). The Lys-Thr-X-X-X-Trp motif, mediates interaction with the PDZ domain of Dvl family members signature appears at 608 to 613; it reads KTLESW. The short motif at 692-694 is the PDZ-binding element; that stretch reads SHV.

Belongs to the G-protein coupled receptor Fz/Smo family. Interacts with ATP6AP2.

The protein localises to the cell membrane. Functionally, receptor for Wnt proteins. Most of frizzled receptors are coupled to the beta-catenin canonical signaling pathway, which leads to the activation of disheveled proteins, inhibition of GSK-3 kinase, nuclear accumulation of beta-catenin and activation of Wnt target genes. A second signaling pathway involving PKC and calcium fluxes has been seen for some family members, but it is not yet clear if it represents a distinct pathway or if it can be integrated in the canonical pathway, as PKC seems to be required for Wnt-mediated inactivation of GSK-3 kinase. Both pathways seem to involve interactions with G-proteins. Required to coordinate the cytoskeletons of epidermal cells to produce a parallel array of cuticular hairs and bristles. This is Frizzled-2 (fz2) from Drosophila melanogaster (Fruit fly).